A 176-amino-acid polypeptide reads, in one-letter code: ATP synthase subunit delta (176 aa).

This sequence belongs to the ATPase delta chain family. In terms of assembly, F-type ATPases have 2 components, F(1) - the catalytic core - and F(0) - the membrane proton channel. F(1) has five subunits: alpha(3), beta(3), gamma(1), delta(1), epsilon(1). F(0) has three main subunits: a(1), b(2) and c(10-14). The alpha and beta chains form an alternating ring which encloses part of the gamma chain. F(1) is attached to F(0) by a central stalk formed by the gamma and epsilon chains, while a peripheral stalk is formed by the delta and b chains.

The protein resides in the cell inner membrane. F(1)F(0) ATP synthase produces ATP from ADP in the presence of a proton or sodium gradient. F-type ATPases consist of two structural domains, F(1) containing the extramembraneous catalytic core and F(0) containing the membrane proton channel, linked together by a central stalk and a peripheral stalk. During catalysis, ATP synthesis in the catalytic domain of F(1) is coupled via a rotary mechanism of the central stalk subunits to proton translocation. Its function is as follows. This protein is part of the stalk that links CF(0) to CF(1). It either transmits conformational changes from CF(0) to CF(1) or is implicated in proton conduction. The sequence is that of ATP synthase subunit delta from Nitratiruptor sp. (strain SB155-2).